The sequence spans 195 residues: Imidazoleglycerol-phosphate dehydratase (195 aa).

The protein belongs to the imidazoleglycerol-phosphate dehydratase family.

The protein localises to the cytoplasm. The enzyme catalyses D-erythro-1-(imidazol-4-yl)glycerol 3-phosphate = 3-(imidazol-4-yl)-2-oxopropyl phosphate + H2O. Its pathway is amino-acid biosynthesis; L-histidine biosynthesis; L-histidine from 5-phospho-alpha-D-ribose 1-diphosphate: step 6/9. The protein is Imidazoleglycerol-phosphate dehydratase of Exiguobacterium sp. (strain ATCC BAA-1283 / AT1b).